Reading from the N-terminus, the 54-residue chain is SPbeta prophage-derived uncharacterized protein YoqE (54 aa).

The chain is SPbeta prophage-derived uncharacterized protein YoqE (yoqE) from Bacillus subtilis (strain 168).